A 1083-amino-acid chain; its full sequence is DNA primase (1083 aa).

The CHC2-type zinc-finger motif lies at 1022-1061; sequence CLRYPHRGGRTAPRTFVSLRVDHHNRLCISLAQQCFATKC.

This sequence belongs to the herpesviridae DNA primase family. In terms of assembly, associates with the helicase and the primase-associated factor to form the helicase-primase factor.

It is found in the host nucleus. In terms of biological role, essential component of the helicase/primase complex. Unwinds the DNA at the replication forks and generates single-stranded DNA for both leading and lagging strand synthesis. The primase initiates primer synthesis and thereby produces large amount of short RNA primers on the lagging strand that the polymerase elongates using dNTPs. The protein is DNA primase of Varicella-zoster virus (strain Oka vaccine) (HHV-3).